The primary structure comprises 160 residues: Transcription factor 12 (160 aa).

The disordered stretch occupies residues 1–58 (NKEKDENLHEPPSSDDMKSDDESSQKDIKVSSRGRTSTNEDEDLNPEQKIEREKERRM). Positions 15–30 (DDMKSDDESSQKDIKV) are enriched in basic and acidic residues. Ser-19 bears the Phosphoserine mark. Lys-29 participates in a covalent cross-link: Glycyl lysine isopeptide (Lys-Gly) (interchain with G-Cter in SUMO2). Phosphothreonine is present on Thr-36. A Phosphoserine modification is found at Ser-37. Positions 46 to 58 (PEQKIEREKERRM) are enriched in basic and acidic residues. The bHLH domain occupies 55-108 (ERRMANNARERLRVRDINEAFKELGRMCQLHLKSEKPQTKLLILHQAVAVILSL). Residues Lys-87 and Lys-131 each participate in a glycyl lysine isopeptide (Lys-Gly) (interchain with G-Cter in SUMO2) cross-link. Positions 110–133 (QQVRERNLNPKAACLKRREEEKVS) are class A specific domain. The disordered stretch occupies residues 132-160 (VSVVSAEPPTTLPGTHPGLSETTNPMGHM). Positions 139–150 (PPTTLPGTHPGL) are enriched in low complexity. Residues 151–160 (SETTNPMGHM) are compositionally biased toward polar residues.

In terms of assembly, efficient DNA binding requires dimerization with another bHLH protein. Forms homo- or heterooligomers with myogenin, E12 and ITF2 proteins. Interacts with PTF1A. Interacts with RUNX1T1. Interacts with NEUROD2. Interacts with BHLHA9.

It localises to the nucleus. In terms of biological role, transcriptional regulator. Involved in the initiation of neuronal differentiation. Activates transcription by binding to the E box (5'-CANNTG-3'). May be involved in the functional network that regulates the development of the GnRH axis. The polypeptide is Transcription factor 12 (TCF12) (Papio hamadryas (Hamadryas baboon)).